Consider the following 759-residue polypeptide: Protein MTSS 1 (759 aa).

Positions 1 to 254 (MEAVIEKECS…EQVILDLKGS (254 aa)) constitute an IMD domain. Residues 108-157 (LQEQMEEWKKVANQLDKDHAKEYKKARQEIKNKSSDTLKLQKKAKKVDAQ) are a coiled coil. Positions 259 to 309 (SYQTPPSSPSTTMSRKSSVCSSLNSVNSSDSRSSGSHSHSPSSHYRYRSSN) are disordered. Thr-262 is modified (phosphothreonine). Ser-265, Ser-266, Ser-275, and Ser-326 each carry phosphoserine. A disordered region spans residues 331-354 (QDAFQSKSPSPMPPEAANQLSNGF). Thr-429 is modified (phosphothreonine). 2 disordered regions span residues 431 to 472 (QRRK…AATR) and 569 to 759 (KRPA…PRFS). Position 607 is a phosphothreonine (Thr-607). The segment covering 612 to 627 (PIPIKTPVIPVKTPTV) has biased composition (low complexity). Phosphoserine is present on residues Ser-648 and Ser-651. The segment covering 660–670 (GVSNIPSSLWS) has biased composition (polar residues). Residues 675–685 (VNPPLPGPKPS) are compositionally biased toward pro residues. The WH2 domain maps to 731–748 (QGEDMLNAIRRGVKLKKT).

This sequence belongs to the MTSS family. Binds to actin. In terms of tissue distribution, strongly expressed in the developing neurons and skeletal and cardiac muscles in embryos. Strongly expressed also in liver, outer layers of the kidney, and in the Purkinje cells of the brain.

It localises to the cytoplasm. Its subcellular location is the cytoskeleton. Its function is as follows. Inhibits the nucleation of actin filaments in vitro. The chain is Protein MTSS 1 from Mus musculus (Mouse).